Here is a 508-residue protein sequence, read N- to C-terminus: Photosystem II CP47 reaction center protein (508 aa).

A run of 6 helical transmembrane segments spans residues 21–36 (SVHI…WAGS), 101–115 (IMFS…IWHW), 140–156 (GIHL…FGAF), 203–218 (IAAG…FHLS), 237–252 (VLSS…AFVV), and 457–472 (SFAL…HGAR).

It belongs to the PsbB/PsbC family. PsbB subfamily. As to quaternary structure, PSII is composed of 1 copy each of membrane proteins PsbA, PsbB, PsbC, PsbD, PsbE, PsbF, PsbH, PsbI, PsbJ, PsbK, PsbL, PsbM, PsbT, PsbX, PsbY, PsbZ, Psb30/Ycf12, at least 3 peripheral proteins of the oxygen-evolving complex and a large number of cofactors. It forms dimeric complexes. Binds multiple chlorophylls. PSII binds additional chlorophylls, carotenoids and specific lipids. serves as cofactor.

It localises to the plastid. Its subcellular location is the chloroplast thylakoid membrane. One of the components of the core complex of photosystem II (PSII). It binds chlorophyll and helps catalyze the primary light-induced photochemical processes of PSII. PSII is a light-driven water:plastoquinone oxidoreductase, using light energy to abstract electrons from H(2)O, generating O(2) and a proton gradient subsequently used for ATP formation. The polypeptide is Photosystem II CP47 reaction center protein (Guizotia abyssinica (Niger)).